A 278-amino-acid polypeptide reads, in one-letter code: 4-deoxy-L-threo-5-hexosulose-uronate ketol-isomerase (278 aa).

Zn(2+) is bound by residues His196, His198, Glu203, and His245.

This sequence belongs to the KduI family. Zn(2+) is required as a cofactor.

The catalysed reaction is 5-dehydro-4-deoxy-D-glucuronate = 3-deoxy-D-glycero-2,5-hexodiulosonate. The protein operates within glycan metabolism; pectin degradation; 2-dehydro-3-deoxy-D-gluconate from pectin: step 4/5. Catalyzes the isomerization of 5-dehydro-4-deoxy-D-glucuronate to 3-deoxy-D-glycero-2,5-hexodiulosonate. This chain is 4-deoxy-L-threo-5-hexosulose-uronate ketol-isomerase, found in Pectobacterium carotovorum subsp. carotovorum (Erwinia carotovora subsp. carotovora).